The sequence spans 243 residues: Carboxy-S-adenosyl-L-methionine synthase (243 aa).

S-adenosyl-L-methionine contacts are provided by residues tyrosine 40, 65 to 67 (GCS), 90 to 91 (DN), 118 to 119 (DI), asparagine 133, and arginine 200.

Belongs to the class I-like SAM-binding methyltransferase superfamily. Cx-SAM synthase family. Homodimer.

The enzyme catalyses prephenate + S-adenosyl-L-methionine = carboxy-S-adenosyl-L-methionine + 3-phenylpyruvate + H2O. Catalyzes the conversion of S-adenosyl-L-methionine (SAM) to carboxy-S-adenosyl-L-methionine (Cx-SAM). The protein is Carboxy-S-adenosyl-L-methionine synthase of Shewanella baltica (strain OS155 / ATCC BAA-1091).